The primary structure comprises 292 residues: MKLAILSRNSSLYSTRRLVEAARARGHTVRILDPLRCYMRIAADGFSMHYKGRPMTGVDMVIPRIGASITRYGTAVLRQFELMGARTPNPSDAILRSRDKLRAHQLLAAKGIDMPVTVFGDNPDDTVDLLSMLGPPPHVVKLNEGTQGRGVILTEKASASRGIVEALRGLYANFLMQEFIGEAKGADLRCFVVGDQVVASMQRQAPEGDFRSNLHAGGTAVAAKASRAEQQVAVRSAKALGLSVCGVDLIRSARGPLVLEVNSTPGLEGIEAACGVDVATRIIEHVEKLKKP.

The region spanning 104 to 287 (HQLLAAKGID…VATRIIEHVE (184 aa)) is the ATP-grasp domain. Residues Lys141, 178-179 (EF), Asp187, and 211-213 (RSN) contribute to the ATP site. Mg(2+) contacts are provided by Asp248, Glu260, and Asn262. Residues Asp248, Glu260, and Asn262 each contribute to the Mn(2+) site.

Belongs to the RimK family. The cofactor is Mg(2+). Mn(2+) is required as a cofactor.

This is Probable alpha-L-glutamate ligase from Stenotrophomonas maltophilia (strain K279a).